Here is a 560-residue protein sequence, read N- to C-terminus: MNIDVVHLLEQNPILLIFVVLAIGLAFGKIRFGKLQLGNSIGVLITSLVMGHLGFSFNAEALTIGFMLFIYCVGIEAGPNFFGIFFRDGKHYFILSMTVLVSAVGLTYFCSHYMGLDFGLSAGMMAGALTATPVLVGAQDALNSGLATIPRNMDFSLVLENLSVGYAMAYLVGLISMIMFAKLLPKLQKQNLSDSAQQIAQERGLGNSSQRKVYLPIIRAYRVGPELIDWTDGKNLRELGIYRQTGCYIERIRRNGILAHPDGDAILQEGDEIALVGFPDSHARLDPSFRNGKEVFDRNLLDLRIVEEEIVVKSDAIAGKRLSDLNLSEFGCFLNRVVRAQIEMPMDLDIVLAKGDVLQVSGEKSRVHGLAEKIGFISIHSQMADLLAFCSFFILGIMFGLVTMTFGQVSFSLGNAVGLLLSGITLGFLRANHPTFGYVPQGALNMVKDLGLMFFMVGIGLSAGGKIFEHLSQVGPQIIGLAFIVSVVPVVLAYLVGAYVLKMNSALLFGAIIGARTCAPAMDVVNEYAKSTIPALGYAGTYAIANILMTLAGTILIILS.

The next 5 helical transmembrane spans lie at 8–28, 37–57, 66–86, 91–111, and 164–184; these read LLEQ…LAFG, LGNS…GFSF, FMLF…GIFF, HYFI…YFCS, and VGYA…AKLL. RCK C-terminal domains lie at 205-292 and 293-376; these read LGNS…FRNG and KEVF…KIGF. Transmembrane regions (helical) follow at residues 386–406, 409–429, 450–470, 478–498, 505–525, and 539–559; these read LLAF…TMTF, VSFS…LGFL, LGLM…IFEH, IIGL…LVGA, SALL…MDVV, and AGTY…LIIL.

Belongs to the AAE transporter (TC 2.A.81) family. YbjL subfamily.

It is found in the cell membrane. This chain is Putative transport protein VIBHAR_02636, found in Vibrio campbellii (strain ATCC BAA-1116).